Here is a 1324-residue protein sequence, read N- to C-terminus: MAFSKGFRIYHKLDPPPFSLIVETRHKEECLMFESGAVAVLSSAEKEAIKGTYSKVLDAYGLLGVLRLNLGDIMLHYLVLVTGCMSVGKIQESEVFRVTSTEFISLRVDSSDEDRISEVRKVLNSGNFYFAWSASGVSLDLSLNAHRSLQEHTTDNRFSWNQSLHLHLKHYGVNCADWLLRLMCGGVEIRTIYAAHKQAKACLISRLSCERAGTRFNVRGTNDDGHVANFVETEQVVYLDDSVSSFIQIRGSVPLFWEQPGLQVGSHRVRMSRGFEANAPAFDRHFRTLKNLYGKQIIVNLLGSKEGEHMLSKAFQSHLKASEHAADIQMVNFDYHQMVKGGKAEKLHSVLKPQVQKFLDYGIFHFDGSEVQRCQSGTVRTNCLDCLDRTNSVQAFLGLEMLTKQLEALGLAEKPQLVTRFQEVFRSMWSVNGDSISKIYAGTGALEGKAKLKDGARSVSRTIQNNFFDSSKQEAIDVLLLGNTLNSDLADKARALLTTGSLRVSEQTLQSASSKVLKSMCENFYKYSKPKKIRVCVGTWNVNGGKQFRSIAFKNQTLTDWLLDAPKLAGIQEFQDKRSKPMDIFPIGFEEMVELNAGNIVNASTTNQKLWAAELQKTISRDNKYVLLASEQLVGVCLFVFIRPQHAPFIRDVAVDTVKTGMGGATGNKGAVAIRMLFHTTSLCFVCSHFAAGQSQVKERNDDFLEIARKLSFPMGRLLFSHDYVFWCGDFNYRIDLPNEEVKELIRQQNWDSLIAGDQLINQKNAGQIFRGFLEGKVTFAPTYKYDLFSDDYDTSEKCRTPAWTDRVLWRRRKWPFDRSAEDLDLLNASFQDESKILYTWTPGTLLHYGRAELKTSDHRPVVALIDIDIFEVEAEERQNIYKEVIAVQGPPDGTVLVSIKSSLPENNFFNDALIDELLQQFTNFGEVILIRFVEDKMWVTFLEGSSALNVLNLNGKELLGRTITITLKSPDWIKTLEEEMSLEKINVPLPSSTSSTLLGEDAEVTADFDMEGDVDDYSAEVEEILPQHLQPSSSSALARPPVLHPGPVPASHLPYRRGPVPSLPVRPSRAPSRTPGPPASQSSPVDTLPATQLQQKDSSQTLEPKRPPPPRPVAPPARPAPPQRPPPPSGARSPAPARERVWSTRKAQERPRRDNLGGSQLPPQGGLPGPGLAGHSAARPIIPPRAGVISAPESHGRVSAGRLTPESQRKTXEVLKGPALLPEPLKPQAALPVPPSLAPPSQEMQEPLIAVAAPLAQSALQPSLETPPQPPPRSRSSHSLPSDAPAAAAGATIRVTGEKQTGVSAVRLDCPLKSDPFEDLSLN.

Residues 119-442 enclose the SAC domain; sequence VRKVLNSGNF…GDSISKIYAG (324 aa). The segment at 475-859 is catalytic; that stretch reads AIDVLLLGNT…GRAELKTSDH (385 aa). Phosphoserine is present on residues S820 and S830. Residues 902-971 form the RRM domain; the sequence is SSLPENNFFN…RTITITLKSP (70 aa). Residues 1030 to 1324 form a disordered region; it reads LQPSSSSALA…SDPFEDLSLN (295 aa). Residues 1080 to 1103 show a composition bias toward polar residues; it reads ASQSSPVDTLPATQLQQKDSSQTL. Over residues 1108 to 1130 the composition is skewed to pro residues; the sequence is PPPPRPVAPPARPAPPQRPPPPS. Positions 1138 to 1156 are enriched in basic and acidic residues; sequence ARERVWSTRKAQERPRRDN. Position 1186 is an omega-N-methylarginine (R1186). T1205 carries the post-translational modification Phosphothreonine. S1277 bears the Phosphoserine mark. The segment covering 1278–1292 has biased composition (low complexity); it reads SHSLPSDAPAAAAGA.

The protein belongs to the synaptojanin family. In the central section; belongs to the inositol 1,4,5-trisphosphate 5-phosphatase family. Interacts with ASH/GRB2. Interacts with PACSIN1, PACSIN2 and PACSIN3. Interacts with AMPH, SH3GL1, SH3GL2 and SH3GL3. Interacts with MYO1E (via SH3 domain). Interacts with BIN1 and DNM1. Interacts with EPS15. Ubiquitously expressed with highest levels in brain.

The protein resides in the cytoplasm. It localises to the perinuclear region. It carries out the reaction a 1,2-diacyl-sn-glycero-3-phospho-(1D-myo-inositol-4,5-bisphosphate) + H2O = a 1,2-diacyl-sn-glycero-3-phospho-(1D-myo-inositol 4-phosphate) + phosphate. Its function is as follows. Phosphatase that acts on various phosphoinositides, including phosphatidylinositol 4-phosphate, phosphatidylinositol (4,5)-bisphosphate and phosphatidylinositol (3,4,5)-trisphosphate. Has a role in clathrin-mediated endocytosis. Hydrolyzes PIP2 bound to actin regulatory proteins resulting in the rearrangement of actin filaments downstream of tyrosine kinase and ASH/GRB2. The sequence is that of Synaptojanin-1 (SYNJ1) from Bos taurus (Bovine).